We begin with the raw amino-acid sequence, 156 residues long: Ribosomal RNA large subunit methyltransferase H (156 aa).

Residues leucine 72, glycine 104, and 123–128 (FGAMVW) contribute to the S-adenosyl-L-methionine site.

It belongs to the RNA methyltransferase RlmH family. Homodimer.

Its subcellular location is the cytoplasm. It carries out the reaction pseudouridine(1915) in 23S rRNA + S-adenosyl-L-methionine = N(3)-methylpseudouridine(1915) in 23S rRNA + S-adenosyl-L-homocysteine + H(+). Functionally, specifically methylates the pseudouridine at position 1915 (m3Psi1915) in 23S rRNA. This is Ribosomal RNA large subunit methyltransferase H from Dinoroseobacter shibae (strain DSM 16493 / NCIMB 14021 / DFL 12).